A 402-amino-acid chain; its full sequence is Acetate kinase (402 aa).

N7 is a Mg(2+) binding site. K14 is an ATP binding site. A substrate-binding site is contributed by R95. D152 (proton donor/acceptor) is an active-site residue. ATP contacts are provided by residues 212–216, 286–288, and 334–338; these read HLGNG, DMR, and GIGEN. Residue E388 participates in Mg(2+) binding.

Belongs to the acetokinase family. As to quaternary structure, homodimer. Mg(2+) serves as cofactor. Requires Mn(2+) as cofactor.

It localises to the cytoplasm. The catalysed reaction is acetate + ATP = acetyl phosphate + ADP. Its pathway is metabolic intermediate biosynthesis; acetyl-CoA biosynthesis; acetyl-CoA from acetate: step 1/2. Functionally, catalyzes the formation of acetyl phosphate from acetate and ATP. Can also catalyze the reverse reaction. This is Acetate kinase from Nitratidesulfovibrio vulgaris (strain ATCC 29579 / DSM 644 / CCUG 34227 / NCIMB 8303 / VKM B-1760 / Hildenborough) (Desulfovibrio vulgaris).